Here is a 156-residue protein sequence, read N- to C-terminus: Large ribosomal subunit protein uL22 (156 aa).

The protein belongs to the universal ribosomal protein uL22 family. As to quaternary structure, part of the 50S ribosomal subunit.

Functionally, this protein binds specifically to 23S rRNA. It makes multiple contacts with different domains of the 23S rRNA in the assembled 50S subunit and ribosome. In terms of biological role, the globular domain of the protein is located near the polypeptide exit tunnel on the outside of the subunit, while an extended beta-hairpin is found that lines the wall of the exit tunnel in the center of the 70S ribosome. In Sulfurisphaera tokodaii (strain DSM 16993 / JCM 10545 / NBRC 100140 / 7) (Sulfolobus tokodaii), this protein is Large ribosomal subunit protein uL22.